The primary structure comprises 60 residues: Mastoparan-VT1 (60 aa).

The N-terminal stretch at M1–A25 is a signal peptide. Residues L26–A45 constitute a propeptide that is removed on maturation. AXPX repeat units lie at residues A31–L34, A35–N38, and A41–E44. Residue L59 is modified to Leucine amide.

Belongs to the MCD family. Mastoparan subfamily. Expressed by the venom gland.

The protein localises to the secreted. In terms of biological role, antimicrobial peptide with activities against Gram-negative and Gram-positive bacteria and the fungi C.albicans and C.parapsilosis. Exhibits little hemolytic activity against washed human erythrocytes. Also acts as a mast cell degranulating peptide. Its mast cell degranulation activity may be related to the activation of G-protein coupled receptors in mast cells as well as interaction with other proteins located in cell endosomal membranes in the mast cells. Its function is as follows. Antimicrobial peptide with activities against Gram-negative and Gram-positive bacteria and the fungi C.albicans and C.parapsilosis. Exhibits little hemolytic activity against washed human erythrocytes. Also acts as a mast cell degranulating peptide. This is Mastoparan-VT1 from Vespa tropica (Greater banded hornet).